Consider the following 245-residue polypeptide: Flavin-dependent thymidylate synthase (245 aa).

The ThyX domain occupies 6–220; the sequence is PRVELLAHTP…PELFAHAGAK (215 aa). FAD is bound by residues serine 65, 89-91, and glutamine 97; that span reads RHR. Residues 86 to 89, 97 to 101, and arginine 159 contribute to the dUMP site; these read QLVR and QQSQR. The short motif at 89 to 99 is the ThyX motif element; the sequence is RHRIASFSQQS. FAD contacts are provided by residues 175–177 and histidine 181; that span reads NCR. Arginine 186 is a dUMP binding site. The Involved in ionization of N3 of dUMP, leading to its activation role is filled by arginine 186.

It belongs to the thymidylate synthase ThyX family. As to quaternary structure, homotetramer. It depends on FAD as a cofactor.

The enzyme catalyses dUMP + (6R)-5,10-methylene-5,6,7,8-tetrahydrofolate + NADPH + H(+) = dTMP + (6S)-5,6,7,8-tetrahydrofolate + NADP(+). It functions in the pathway pyrimidine metabolism; dTTP biosynthesis. Functionally, catalyzes the reductive methylation of 2'-deoxyuridine-5'-monophosphate (dUMP) to 2'-deoxythymidine-5'-monophosphate (dTMP) while utilizing 5,10-methylenetetrahydrofolate (mTHF) as the methyl donor, and NADPH and FADH(2) as the reductant. This is Flavin-dependent thymidylate synthase from Nitratidesulfovibrio vulgaris (strain ATCC 29579 / DSM 644 / CCUG 34227 / NCIMB 8303 / VKM B-1760 / Hildenborough) (Desulfovibrio vulgaris).